Consider the following 447-residue polypeptide: Polyamine export protein (447 aa).

The Cytoplasmic portion of the chain corresponds to 1-4 (MLNS). A CNNM transmembrane domain is found at 1 to 197 (MLNSILVILC…ALAGVLRKQE (197 aa)). The helical transmembrane segment at 5 to 25 (ILVILCLIAVSAFFSMSEISL) threads the bilayer. Topologically, residues 26 to 54 (AASRKIKLKLLADEGNINAQRVLNMQENP) are periplasmic. Residues 55-75 (GMFFTVVQIGLNAVAILGGIV) form a helical membrane-spanning segment. Topologically, residues 76–99 (GDAAFSPAFHSLFSRYMSAELSEQ) are cytoplasmic. The helical transmembrane segment at 100 to 120 (LSFILSFSLVTGMFILFADLT) threads the bilayer. Topologically, residues 121-141 (PKRIGMIAPEAVALRIINPMR) are periplasmic. A helical transmembrane segment spans residues 142–162 (FCLYVCTPLVWFFNGLANIIF). The Cytoplasmic portion of the chain corresponds to 163–447 (RIFKLPMVRK…DAKDKEESVA (285 aa)). 2 consecutive CBS domains span residues 216–275 (MTPR…NQSL) and 282–343 (QIRN…GLEE).

This sequence belongs to the UPF0053 family. PaeA subfamily.

It is found in the cell inner membrane. Its function is as follows. Involved in cadaverine and putrescine tolerance in stationary phase. May facilitate the efflux of both cadaverine and putrescine from the cytoplasm, reducing potentially toxic levels under certain stress conditions. The chain is Polyamine export protein from Escherichia coli O157:H7.